The following is a 292-amino-acid chain: Cyclin-dependent-like kinase 5 (292 aa).

One can recognise a Protein kinase domain in the interval 4-286 (YEKLEKIGEG…ADEALQHPYF (283 aa)). ATP-binding positions include 10–18 (IGEGTYGTV) and K33. Position 14 is a phosphothreonine (T14). Y15 is subject to Phosphotyrosine. T17 carries the phosphothreonine modification. S46 is subject to Phosphoserine. K56 carries the post-translational modification N6-acetyllysine. The residue at position 72 (S72) is a Phosphoserine. D126 serves as the catalytic Proton acceptor. S159 carries the phosphoserine modification. Position 239 is a phosphotyrosine (Y239).

This sequence belongs to the protein kinase superfamily. CMGC Ser/Thr protein kinase family. CDC2/CDKX subfamily.

Its subcellular location is the nucleus. The protein resides in the cytoplasm. It localises to the cell membrane. It is found in the perikaryon. The protein localises to the cell projection. Its subcellular location is the growth cone. The protein resides in the lamellipodium. It localises to the postsynaptic density. It catalyses the reaction L-seryl-[protein] + ATP = O-phospho-L-seryl-[protein] + ADP + H(+). It carries out the reaction L-threonyl-[protein] + ATP = O-phospho-L-threonyl-[protein] + ADP + H(+). In terms of biological role, proline-directed serine/threonine-protein kinase essential for neuronal cell cycle arrest and differentiation and may be involved in apoptotic cell death in neuronal diseases by triggering abortive cell cycle re-entry. Interacts with D1 and D3-type G1 cyclins. Regulates several neuronal development and physiological processes including neuronal survival, migration and differentiation, axonal and neurite growth, synaptogenesis, oligodendrocyte differentiation, synaptic plasticity and neurotransmission, by phosphorylating key proteins. In the mature central nervous system (CNS), regulates neurotransmitter movements by phosphorylating substrates associated with neurotransmitter release and synapse plasticity; synaptic vesicle exocytosis, vesicles fusion with the presynaptic membrane, and endocytosis. May regulate endothelial cell migration and angiogenesis via the modulation of lamellipodia formation. The complex p35/CDK5 may participate in the regulation of the circadian clock. The polypeptide is Cyclin-dependent-like kinase 5 (cdk5) (Xenopus laevis (African clawed frog)).